Consider the following 669-residue polypeptide: DNA ligase (669 aa).

Residues 33-37, 82-83, and glutamate 114 each bind NAD(+); these read DAEYD and SL. Catalysis depends on lysine 116, which acts as the N6-AMP-lysine intermediate. The NAD(+) site is built by arginine 137, glutamate 174, lysine 291, and lysine 315. Zn(2+)-binding residues include cysteine 409, cysteine 412, cysteine 427, and cysteine 433. A BRCT domain is found at 593 to 669; the sequence is EIPQPLAGKV…QTEQDLLALL (77 aa).

This sequence belongs to the NAD-dependent DNA ligase family. LigA subfamily. Requires Mg(2+) as cofactor. Mn(2+) is required as a cofactor.

It catalyses the reaction NAD(+) + (deoxyribonucleotide)n-3'-hydroxyl + 5'-phospho-(deoxyribonucleotide)m = (deoxyribonucleotide)n+m + AMP + beta-nicotinamide D-nucleotide.. DNA ligase that catalyzes the formation of phosphodiester linkages between 5'-phosphoryl and 3'-hydroxyl groups in double-stranded DNA using NAD as a coenzyme and as the energy source for the reaction. It is essential for DNA replication and repair of damaged DNA. The sequence is that of DNA ligase from Vibrio vulnificus (strain YJ016).